We begin with the raw amino-acid sequence, 271 residues long: Acetyl-coenzyme A carboxylase carboxyl transferase subunit beta (271 aa).

In terms of domain architecture, CoA carboxyltransferase N-terminal spans 21 to 271; the sequence is LWIQCPYCKQ…LGDLLALHTA (251 aa). C25, C28, C43, and C46 together coordinate Zn(2+). Residues 25–46 form a C4-type zinc finger; sequence CPYCKQGSYRESLGNAQVCPHC.

Belongs to the AccD/PCCB family. In terms of assembly, acetyl-CoA carboxylase is a heterohexamer composed of biotin carboxyl carrier protein (AccB), biotin carboxylase (AccC) and two subunits each of ACCase subunit alpha (AccA) and ACCase subunit beta (AccD). It depends on Zn(2+) as a cofactor.

It is found in the cytoplasm. It catalyses the reaction N(6)-carboxybiotinyl-L-lysyl-[protein] + acetyl-CoA = N(6)-biotinyl-L-lysyl-[protein] + malonyl-CoA. The protein operates within lipid metabolism; malonyl-CoA biosynthesis; malonyl-CoA from acetyl-CoA: step 1/1. Component of the acetyl coenzyme A carboxylase (ACC) complex. Biotin carboxylase (BC) catalyzes the carboxylation of biotin on its carrier protein (BCCP) and then the CO(2) group is transferred by the transcarboxylase to acetyl-CoA to form malonyl-CoA. The sequence is that of Acetyl-coenzyme A carboxylase carboxyl transferase subunit beta from Lacticaseibacillus paracasei (strain ATCC 334 / BCRC 17002 / CCUG 31169 / CIP 107868 / KCTC 3260 / NRRL B-441) (Lactobacillus paracasei).